A 191-amino-acid polypeptide reads, in one-letter code: Thymidine kinase (191 aa).

Residues 9 to 16 (GSMNSGKT) and 85 to 88 (DESQ) each bind ATP. The Proton acceptor role is filled by Glu86. Residues Cys143, Cys146, Cys181, and Cys184 each contribute to the Zn(2+) site.

This sequence belongs to the thymidine kinase family. As to quaternary structure, homotetramer.

The protein localises to the cytoplasm. It carries out the reaction thymidine + ATP = dTMP + ADP + H(+). In Listeria innocua serovar 6a (strain ATCC BAA-680 / CLIP 11262), this protein is Thymidine kinase.